A 386-amino-acid polypeptide reads, in one-letter code: MKFIDEARIEVMAGRGGNGVASFRREKFVPFGGPDGGDGGKGGSVYAVADENVNTLVEYRFVKKYLAQHGERGRGADCYGKGGDDIELKMPVGTVIHDADTGELVADLTHHGQRVMIAKGGKGGLGNIHFKSSTNRAPRQCTPGEQGEQRTLKLELKVLADVGLLGMPNAGKSTFIRSVSAARPKVADYPFTTLHPNLGVVRMDDTRSFVIADIPGLIEGAAEGAGLGHRFLKHLQRTGLLLHVVDIAPFDPDVDPVREARAIVEELKKFDEELHGKPRWLVLNKVDMLPEDERELTVSAFLNAYGWPQERPDDSLGFDIKAPRVFTISALNHEGTRELTFAIMSYLDVVRAQARKEAEALQQQAAAAKQKVIMPEAPAVSEGDDA.

An Obg domain is found at 1 to 159 (MKFIDEARIE…RTLKLELKVL (159 aa)). Residues 160-348 (ADVGLLGMPN…LTFAIMSYLD (189 aa)) enclose the OBG-type G domain. GTP-binding positions include 166 to 173 (GMPNAGKS), 191 to 195 (FTTLH), 213 to 216 (DIPG), 284 to 287 (NKVD), and 329 to 331 (SAL). Mg(2+) is bound by residues serine 173 and threonine 193.

Belongs to the TRAFAC class OBG-HflX-like GTPase superfamily. OBG GTPase family. Monomer. Requires Mg(2+) as cofactor.

The protein resides in the cytoplasm. Functionally, an essential GTPase which binds GTP, GDP and possibly (p)ppGpp with moderate affinity, with high nucleotide exchange rates and a fairly low GTP hydrolysis rate. Plays a role in control of the cell cycle, stress response, ribosome biogenesis and in those bacteria that undergo differentiation, in morphogenesis control. The chain is GTPase Obg from Chromobacterium violaceum (strain ATCC 12472 / DSM 30191 / JCM 1249 / CCUG 213 / NBRC 12614 / NCIMB 9131 / NCTC 9757 / MK).